We begin with the raw amino-acid sequence, 256 residues long: Ubiquinone/menaquinone biosynthesis C-methyltransferase UbiE (256 aa).

Residues Thr79, Asp100, and 128 to 129 contribute to the S-adenosyl-L-methionine site; that span reads DA.

It belongs to the class I-like SAM-binding methyltransferase superfamily. MenG/UbiE family.

The catalysed reaction is a 2-demethylmenaquinol + S-adenosyl-L-methionine = a menaquinol + S-adenosyl-L-homocysteine + H(+). The enzyme catalyses a 2-methoxy-6-(all-trans-polyprenyl)benzene-1,4-diol + S-adenosyl-L-methionine = a 5-methoxy-2-methyl-3-(all-trans-polyprenyl)benzene-1,4-diol + S-adenosyl-L-homocysteine + H(+). It participates in quinol/quinone metabolism; menaquinone biosynthesis; menaquinol from 1,4-dihydroxy-2-naphthoate: step 2/2. It functions in the pathway cofactor biosynthesis; ubiquinone biosynthesis. Methyltransferase required for the conversion of demethylmenaquinol (DMKH2) to menaquinol (MKH2) and the conversion of 2-polyprenyl-6-methoxy-1,4-benzoquinol (DDMQH2) to 2-polyprenyl-3-methyl-6-methoxy-1,4-benzoquinol (DMQH2). The protein is Ubiquinone/menaquinone biosynthesis C-methyltransferase UbiE of Stutzerimonas stutzeri (strain A1501) (Pseudomonas stutzeri).